A 137-amino-acid polypeptide reads, in one-letter code: 2-iminobutanoate/2-iminopropanoate deaminase (137 aa).

Position 2 is an N-acetylserine (Ser-2). N6-succinyllysine is present on residues Lys-13, Lys-60, and Lys-67. Residue Thr-74 is modified to Phosphothreonine.

Belongs to the RutC family. Homotrimer. Interacts with YTHDF2. Liver and kidney.

Its subcellular location is the cytoplasm. It localises to the nucleus. The protein resides in the peroxisome. It is found in the mitochondrion. The enzyme catalyses 2-iminobutanoate + H2O = 2-oxobutanoate + NH4(+). The catalysed reaction is 2-iminopropanoate + H2O = pyruvate + NH4(+). In terms of biological role, catalyzes the hydrolytic deamination of enamine/imine intermediates that form during the course of normal metabolism. May facilitate the release of ammonia from these potentially toxic reactive metabolites, reducing their impact on cellular components. It may act on enamine/imine intermediates formed by several types of pyridoxal-5'-phosphate-dependent dehydratases including L-threonine dehydratase. Its function is as follows. Also promotes endoribonucleolytic cleavage of some transcripts by promoting recruitment of the ribonuclease P/MRP complex. Acts by bridging YTHDF2 and the ribonuclease P/MRP complex. RIDA/HRSP12 binds to N6-methyladenosine (m6A)-containing mRNAs containing a 5'-GGUUC-3' motif: cooperative binding of RIDA/HRSP12 and YTHDF2 to such transcripts lead to recruitment of the ribonuclease P/MRP complex and subsequent endoribonucleolytic cleavage. In Rattus norvegicus (Rat), this protein is 2-iminobutanoate/2-iminopropanoate deaminase.